The chain runs to 81 residues: Omega-conotoxin-like TxMKLT1-0223 (81 aa).

Residues 1–22 (MKLTCMMIVAVLFLTAWTFVTA) form the signal peptide. Residues 23–52 (VPHSSNALENLYLKARHEMENPEASKLNTR) constitute a propeptide that is removed on maturation. 3 disulfide bridges follow: Cys55–Cys72, Cys62–Cys76, and Cys71–Cys80.

It belongs to the conotoxin O1 superfamily. Expressed by the venom duct.

The protein resides in the secreted. Its function is as follows. Omega-conotoxins act at presynaptic membranes, they bind and block voltage-gated calcium channels (Cav). This Conus textile (Cloth-of-gold cone) protein is Omega-conotoxin-like TxMKLT1-0223.